The following is a 37-amino-acid chain: Large ribosomal subunit protein bL36 (37 aa).

It belongs to the bacterial ribosomal protein bL36 family.

The polypeptide is Large ribosomal subunit protein bL36 (Nostoc sp. (strain PCC 7120 / SAG 25.82 / UTEX 2576)).